Reading from the N-terminus, the 183-residue chain is Glutathione-regulated potassium-efflux system ancillary protein KefG (183 aa).

Belongs to the NAD(P)H dehydrogenase (quinone) family. KefG subfamily. Interacts with KefB.

The protein localises to the cell inner membrane. The catalysed reaction is a quinone + NADH + H(+) = a quinol + NAD(+). It catalyses the reaction a quinone + NADPH + H(+) = a quinol + NADP(+). Its function is as follows. Regulatory subunit of a potassium efflux system that confers protection against electrophiles. Required for full activity of KefB. This chain is Glutathione-regulated potassium-efflux system ancillary protein KefG, found in Enterobacter sp. (strain 638).